The chain runs to 714 residues: GATA zinc finger domain-containing protein 10 (714 aa).

Disordered stretches follow at residues 28–97, 115–180, 266–362, 394–419, 454–476, and 528–621; these read YIQQ…NKQI, TMPH…QQQQ, MPMN…QQQQ, QQQQ…ESMD, MHLQ…QQIQ, and IQQQ…RRRT. Composition is skewed to low complexity over residues 30–94 and 130–147; these read QQQQ…NNNN and QQQQ…QHPH. Residues 148 to 168 are compositionally biased toward basic residues; that stretch reads QQQHPHQQQHPHQQQHPHQQQ. The span at 169 to 180 shows a compositional bias: low complexity; it reads HPHQQQIQQQQQ. A compositionally biased stretch (polar residues) spans 271–282; it reads GGNSRKNSFDMY. Composition is skewed to low complexity over residues 283–322 and 340–362; these read NNNN…NNNI and QHQQ…QQQQ. Composition is skewed to low complexity over residues 457-476 and 528-549; these read QQQQ…QQIQ and IQQQ…TPNN. Polar residues predominate over residues 550-569; that stretch reads GSPSSSDGKSPVNSNTAITS. The segment covering 570-588 has biased composition (low complexity); sequence NNNNNNNNNNNNNNNNNNN. A GATA-type zinc finger spans residues 631-656; sequence CHYCEVTETPEWRRGPDGDHTLCNAC. The stretch at 661 to 694 forms a coiled coil; it reads AKSQKKLAREKELEKQKELEREKERENTRKHSID. The segment covering 667-693 has biased composition (basic and acidic residues); that stretch reads LAREKELEKQKELEREKERENTRKHSI. Residues 667 to 714 are disordered; that stretch reads LAREKELEKQKELEREKERENTRKHSIDFMLMNDTSSAPTNSQNPTPN. The span at 699–714 shows a compositional bias: polar residues; the sequence is NDTSSAPTNSQNPTPN.

This is GATA zinc finger domain-containing protein 10 (gtaJ) from Dictyostelium discoideum (Social amoeba).